A 451-amino-acid polypeptide reads, in one-letter code: Phosphoglucosamine mutase (451 aa).

S101 (phosphoserine intermediate) is an active-site residue. Mg(2+)-binding residues include S101, D243, D245, and D247. The residue at position 101 (S101) is a Phosphoserine.

This sequence belongs to the phosphohexose mutase family. Requires Mg(2+) as cofactor. Activated by phosphorylation.

It carries out the reaction alpha-D-glucosamine 1-phosphate = D-glucosamine 6-phosphate. Its function is as follows. Catalyzes the conversion of glucosamine-6-phosphate to glucosamine-1-phosphate. In Geobacter metallireducens (strain ATCC 53774 / DSM 7210 / GS-15), this protein is Phosphoglucosamine mutase.